Here is a 92-residue protein sequence, read N- to C-terminus: DNA/RNA-binding protein Alba (92 aa).

Residue Lys11 is modified to N6-acetyllysine.

This sequence belongs to the histone-like Alba family. In terms of processing, acetylated. Acetylation at Lys-11 decreases DNA-binding affinity.

It localises to the cytoplasm. The protein resides in the chromosome. Binds double-stranded DNA tightly but without sequence specificity. Involved in DNA compaction. This chain is DNA/RNA-binding protein Alba, found in Pyrobaculum islandicum (strain DSM 4184 / JCM 9189 / GEO3).